The primary structure comprises 436 residues: Methylenetetrahydrofolate--tRNA-(uracil-5-)-methyltransferase TrmFO (436 aa).

8–13 (GGGLAG) is a binding site for FAD.

This sequence belongs to the MnmG family. TrmFO subfamily. The cofactor is FAD.

It localises to the cytoplasm. The enzyme catalyses uridine(54) in tRNA + (6R)-5,10-methylene-5,6,7,8-tetrahydrofolate + NADH + H(+) = 5-methyluridine(54) in tRNA + (6S)-5,6,7,8-tetrahydrofolate + NAD(+). It catalyses the reaction uridine(54) in tRNA + (6R)-5,10-methylene-5,6,7,8-tetrahydrofolate + NADPH + H(+) = 5-methyluridine(54) in tRNA + (6S)-5,6,7,8-tetrahydrofolate + NADP(+). In terms of biological role, catalyzes the folate-dependent formation of 5-methyl-uridine at position 54 (M-5-U54) in all tRNAs. This Syntrophomonas wolfei subsp. wolfei (strain DSM 2245B / Goettingen) protein is Methylenetetrahydrofolate--tRNA-(uracil-5-)-methyltransferase TrmFO.